Reading from the N-terminus, the 206-residue chain is MIDFDGYRPNVGIVICNKAGQVLWAKRFGQNSWQFPQGGINEGENIETAMYRELYEEVGLTKKDVRLLWASKYWLKYKLPKRLVRSDGSQLVCIGQKQRWFLLQLLSDENLIDLKTTKSPEFDGWRWVSFWYPVRQVVSFKRDVYRKVMKEFAGVLLNESKKPETVEKPRVERTEKRDFQKRDNQKREFRKSARMWNNSHQKGKAQ.

Residues 6–150 (GYRPNVGIVI…KRDVYRKVMK (145 aa)) form the Nudix hydrolase domain. Residues 38-59 (GGINEGENIETAMYRELYEEVG) carry the Nudix box motif. Positions 162-191 (KPETVEKPRVERTEKRDFQKRDNQKREFRK) are enriched in basic and acidic residues. The segment at 162–206 (KPETVEKPRVERTEKRDFQKRDNQKREFRKSARMWNNSHQKGKAQ) is disordered.

The protein belongs to the Nudix hydrolase family. RppH subfamily. Requires a divalent metal cation as cofactor.

In terms of biological role, accelerates the degradation of transcripts by removing pyrophosphate from the 5'-end of triphosphorylated RNA, leading to a more labile monophosphorylated state that can stimulate subsequent ribonuclease cleavage. The sequence is that of RNA pyrophosphohydrolase from Actinobacillus pleuropneumoniae serotype 5b (strain L20).